Here is a 700-residue protein sequence, read N- to C-terminus: Polyribonucleotide nucleotidyltransferase (700 aa).

Mg(2+)-binding residues include Asp485 and Asp491. A KH domain is found at 552-611 (PRITVIKINPEKIRDVIGKGGAVIRALTEETGTTIELEDDGTVKIASSNGEATKEAIRRI). Positions 621-689 (GRIYNGKVIR…RQGRVRLSIK (69 aa)) constitute an S1 motif domain.

Belongs to the polyribonucleotide nucleotidyltransferase family. In terms of assembly, component of the RNA degradosome, which is a multiprotein complex involved in RNA processing and mRNA degradation. Mg(2+) serves as cofactor.

Its subcellular location is the cytoplasm. It carries out the reaction RNA(n+1) + phosphate = RNA(n) + a ribonucleoside 5'-diphosphate. Its function is as follows. Involved in mRNA degradation. Catalyzes the phosphorolysis of single-stranded polyribonucleotides processively in the 3'- to 5'-direction. In Shewanella baltica (strain OS185), this protein is Polyribonucleotide nucleotidyltransferase.